A 263-amino-acid polypeptide reads, in one-letter code: Receptor-transporting protein 1 (263 aa).

Residues 1–238 lie on the Cytoplasmic side of the membrane; sequence MRIFRPWRLR…ETGSGCNFCS (238 aa). The 3CxxC-type zinc-finger motif lies at 88-197; that stretch reads ASGRFHCSWC…GEFCEACQEG (110 aa). A helical transmembrane segment spans residues 239–259; the sequence is IPWCLFWATVLMLIIYLQFSF. The Extracellular portion of the chain corresponds to 260 to 263; sequence RTSV.

This sequence belongs to the TMEM7 family. In terms of assembly, interacts with olfactory receptors. In terms of tissue distribution, predominantly expressed in olfactory and vomeronasal organs, in mature olfactory sensory neurons.

It localises to the cell membrane. Specifically promotes functional cell surface expression of olfactory receptors, but not of other GPCRs. The sequence is that of Receptor-transporting protein 1 (Rtp1) from Mus musculus (Mouse).